We begin with the raw amino-acid sequence, 894 residues long: Low-affinity phosphate transporter PHO91 (894 aa).

The SPX domain maps to 1-256; sequence MKFSHSLQFN…NTNLKQNYLN (256 aa). Disordered stretches follow at residues 124–160 and 293–321; these read QHQLQSVARNRKSKSQQRQRRFSSVSSTDSNPSLTDM and RPSNTFNLDADRINNDENSSGNEEDEDGN. The segment covering 132 to 144 has biased composition (basic residues); it reads RNRKSKSQQRQRR. Over residues 151–160 the composition is skewed to polar residues; it reads TDSNPSLTDM. Phosphoserine occurs at positions 295, 311, and 312. Transmembrane regions (helical) follow at residues 430–450, 474–494, 511–531, 557–577, 602–622, 642–662, 682–702, 706–726, 738–758, 777–797, 799–819, 824–844, and 874–894; these read LKFLLITSCFIALLTFNLTPF, TIPLFVTSLMIPLLIVVFPVI, FILSTMWSSVIMLLLGGFTLA, FILLTNMFVALFVSMWVSNVA, ALILGIALASNIGGMSSPIAS, FMIALPVCFICVMAIWVLLII, FTLKQWFVTLVCIITIVLWCL, ISGIFGEMGIISIIPIVVFFG, FMWTIVVLAMGGTTLGKAVSS, PIFIIVLIFGLVILVMATFVS, TVAAMIIVPLMSEIGSNLPSG, LLIVIAALLCSSAMGLPTSGF, and SLLSYAAIVTVGYGILKVMGF.

This sequence belongs to the CitM (TC 2.A.11) transporter family. Ubiquitinated by RSP5. RSP5-mediated ubiquitination initiates internalization and degradation by the endocytic pathway.

It localises to the vacuole membrane. Vacuolar phosphate transporter that probably exports phosphate from the vacuolar lumen to the cytosol. The polypeptide is Low-affinity phosphate transporter PHO91 (PHO91) (Saccharomyces cerevisiae (strain ATCC 204508 / S288c) (Baker's yeast)).